The sequence spans 252 residues: 2-succinyl-6-hydroxy-2,4-cyclohexadiene-1-carboxylate synthase (252 aa).

This sequence belongs to the AB hydrolase superfamily. MenH family. In terms of assembly, monomer.

The enzyme catalyses 5-enolpyruvoyl-6-hydroxy-2-succinyl-cyclohex-3-ene-1-carboxylate = (1R,6R)-6-hydroxy-2-succinyl-cyclohexa-2,4-diene-1-carboxylate + pyruvate. It functions in the pathway quinol/quinone metabolism; 1,4-dihydroxy-2-naphthoate biosynthesis; 1,4-dihydroxy-2-naphthoate from chorismate: step 3/7. The protein operates within quinol/quinone metabolism; menaquinone biosynthesis. Catalyzes a proton abstraction reaction that results in 2,5-elimination of pyruvate from 2-succinyl-5-enolpyruvyl-6-hydroxy-3-cyclohexene-1-carboxylate (SEPHCHC) and the formation of 2-succinyl-6-hydroxy-2,4-cyclohexadiene-1-carboxylate (SHCHC). The polypeptide is 2-succinyl-6-hydroxy-2,4-cyclohexadiene-1-carboxylate synthase (Escherichia coli (strain UTI89 / UPEC)).